A 267-amino-acid polypeptide reads, in one-letter code: 4-hydroxy-2-oxo-heptane-1,7-dioate aldolase (267 aa).

Histidine 45 functions as the Proton acceptor in the catalytic mechanism. Residue glutamine 147 coordinates substrate. Position 149 (glutamate 149) interacts with a divalent metal cation. 2 residues coordinate substrate: alanine 174 and aspartate 175. Aspartate 175 is an a divalent metal cation binding site.

Belongs to the HpcH/HpaI aldolase family. As to quaternary structure, homohexamer; trimer of dimers. A divalent metal cation is required as a cofactor.

The catalysed reaction is 4-hydroxy-2-oxoheptanedioate = succinate semialdehyde + pyruvate. Its pathway is aromatic compound metabolism; 4-hydroxyphenylacetate degradation; pyruvate and succinate semialdehyde from 4-hydroxyphenylacetate: step 7/7. Its function is as follows. Catalyzes the reversible retro-aldol cleavage of 4-hydroxy-2-ketoheptane-1,7-dioate (HKHD) to pyruvate and succinic semialdehyde. This is 4-hydroxy-2-oxo-heptane-1,7-dioate aldolase from Shigella flexneri.